We begin with the raw amino-acid sequence, 312 residues long: Small ribosomal subunit protein uS2 (312 aa).

It belongs to the universal ribosomal protein uS2 family.

This is Small ribosomal subunit protein uS2 from Ruthia magnifica subsp. Calyptogena magnifica.